Consider the following 521-residue polypeptide: uncharacterized protein (521 aa).

The disordered stretch occupies residues 1-25 (MLQRSLGVNGRKLAMSARSAKRERK). 6 consecutive transmembrane segments (helical) span residues 68–88 (GAVW…GAVL), 114–134 (VLIV…SLTV), 160–180 (VVLA…HTVG), 192–212 (VAVT…IYFL), 290–310 (ALLV…GWCW), and 399–419 (LLFW…CAQI).

The protein localises to the cell membrane. This is an uncharacterized protein from Mycobacterium tuberculosis (strain CDC 1551 / Oshkosh).